The chain runs to 173 residues: Crossover junction endodeoxyribonuclease RuvC (173 aa).

Active-site residues include aspartate 8, glutamate 67, and aspartate 139. The Mg(2+) site is built by aspartate 8, glutamate 67, and aspartate 139.

The protein belongs to the RuvC family. As to quaternary structure, homodimer which binds Holliday junction (HJ) DNA. The HJ becomes 2-fold symmetrical on binding to RuvC with unstacked arms; it has a different conformation from HJ DNA in complex with RuvA. In the full resolvosome a probable DNA-RuvA(4)-RuvB(12)-RuvC(2) complex forms which resolves the HJ. Mg(2+) is required as a cofactor.

It localises to the cytoplasm. It catalyses the reaction Endonucleolytic cleavage at a junction such as a reciprocal single-stranded crossover between two homologous DNA duplexes (Holliday junction).. The RuvA-RuvB-RuvC complex processes Holliday junction (HJ) DNA during genetic recombination and DNA repair. Endonuclease that resolves HJ intermediates. Cleaves cruciform DNA by making single-stranded nicks across the HJ at symmetrical positions within the homologous arms, yielding a 5'-phosphate and a 3'-hydroxyl group; requires a central core of homology in the junction. The consensus cleavage sequence is 5'-(A/T)TT(C/G)-3'. Cleavage occurs on the 3'-side of the TT dinucleotide at the point of strand exchange. HJ branch migration catalyzed by RuvA-RuvB allows RuvC to scan DNA until it finds its consensus sequence, where it cleaves and resolves the cruciform DNA. The sequence is that of Crossover junction endodeoxyribonuclease RuvC from Yersinia pseudotuberculosis serotype O:1b (strain IP 31758).